The primary structure comprises 394 residues: Elongation factor Tu 2 (394 aa).

Residues 10 to 204 form the tr-type G domain; the sequence is KPHVNVGTIG…ALDTYIPEPA (195 aa). The tract at residues 19–26 is G1; that stretch reads GHVDHGKT. 19–26 provides a ligand contact to GTP; sequence GHVDHGKT. Residue Thr-26 coordinates Mg(2+). A G2 region spans residues 60–64; the sequence is GITIN. Residues 81–84 are G3; sequence DCPG. GTP-binding positions include 81–85 and 136–139; these read DCPGH and NKCD. The segment at 136 to 139 is G4; that stretch reads NKCD. The G5 stretch occupies residues 174-176; sequence SAL.

The protein belongs to the TRAFAC class translation factor GTPase superfamily. Classic translation factor GTPase family. EF-Tu/EF-1A subfamily. As to quaternary structure, monomer.

The protein resides in the cytoplasm. It catalyses the reaction GTP + H2O = GDP + phosphate + H(+). Its function is as follows. GTP hydrolase that promotes the GTP-dependent binding of aminoacyl-tRNA to the A-site of ribosomes during protein biosynthesis. This is Elongation factor Tu 2 from Shewanella frigidimarina (strain NCIMB 400).